A 248-amino-acid polypeptide reads, in one-letter code: Probable transcriptional regulatory protein blr1534 (248 aa).

A disordered region spans residues 1–21 (MAGHSQFKNIMHRKGRQDAQK).

It belongs to the TACO1 family.

Its subcellular location is the cytoplasm. In Bradyrhizobium diazoefficiens (strain JCM 10833 / BCRC 13528 / IAM 13628 / NBRC 14792 / USDA 110), this protein is Probable transcriptional regulatory protein blr1534.